The following is a 449-amino-acid chain: Phosphoglucosamine mutase (449 aa).

The active-site Phosphoserine intermediate is Ser100. The Mg(2+) site is built by Ser100, Asp241, Asp243, and Asp245. At Ser100 the chain carries Phosphoserine.

Belongs to the phosphohexose mutase family. The cofactor is Mg(2+). In terms of processing, activated by phosphorylation.

The catalysed reaction is alpha-D-glucosamine 1-phosphate = D-glucosamine 6-phosphate. In terms of biological role, catalyzes the conversion of glucosamine-6-phosphate to glucosamine-1-phosphate. The protein is Phosphoglucosamine mutase of Clostridium botulinum (strain Kyoto / Type A2).